Reading from the N-terminus, the 590-residue chain is Keratin, type II cytoskeletal 5 (590 aa).

Low complexity predominate over residues 1–18; that stretch reads MSRQSSVSFRSGGSRSFS. A disordered region spans residues 1 to 20; that stretch reads MSRQSSVSFRSGGSRSFSTA. Positions 1-167 are head; sequence MSRQSSVSFR…DPSIQRVRTE (167 aa). A phosphoserine mark is found at Ser5, Ser8, Ser16, and Ser21. Thr24 is modified (phosphothreonine; by CDK1). Residues Ser26, Ser36, Ser50, Ser64, Ser71, Ser75, and Ser82 each carry the phosphoserine modification. At Thr151 the chain carries Phosphothreonine; by CDK1. A coil 1A region spans residues 168 to 203; that stretch reads EREQIKTLNNKFASFIDKVRFLEQQNKVLDTKWTLL. Positions 168 to 481 constitute an IF rod domain; the sequence is EREQIKTLNN…KLLEGEECRL (314 aa). The segment at 204–222 is linker 1; it reads QEQGTKTVRQNLEPLFEQY. Positions 223–315 are coil 1B; that stretch reads INNLRRQLDS…FFDAELSQMQ (93 aa). The linker 12 stretch occupies residues 316–338; it reads THVSDTSVVLSMDNNRNLDLDSI. Positions 339–477 are coil 2; that stretch reads IAEVKAQYEE…ATYRKLLEGE (139 aa). A tail region spans residues 478–590; it reads ECRLSGEGVG…TSSSRKSFKS (113 aa). Positions 566 to 590 are disordered; the sequence is GSGGGSSSSVKFVSTTSSSRKSFKS. The span at 572–590 shows a compositional bias: low complexity; sequence SSSVKFVSTTSSSRKSFKS.

It belongs to the intermediate filament family. Heterodimer of a type I and a type II keratin. Heterodimer with type I keratin KRT25 leading to the formation of keratin intermediate filament (KIF) network. Forms a heterodimer (via 2B domains) with KRT14 (via 2B domains). Interacts with PLEC isoform 1C, when in a heterodimer with KRT14. Interacts with TCHP. Interacts with EPPK1. Interacts with AMELX. Interacts with PKP1 (via N-terminus) and PKP2. Post-translationally, phosphorylated by CDK1, AURKB and Rho-kinase, phosphorylation is regulated by the cell cycle. Thr-24 phosphorylation, mediated by CDK1, peaks during prometaphase or metaphase cells with phosphorylated filamentous structures evident throughout the cytoplasm during early mitosis. CDK1 phosphorylates Thr-24 in mitotic cells at the site of injury. O-glycosylated. Expressed in corneal epithelium (at protein level). Expressed in keratinocytes (at protein level).

Its subcellular location is the cytoplasm. Functionally, required for the formation of keratin intermediate filaments in the basal epidermis and maintenance of the skin barrier in response to mechanical stress. Regulates the recruitment of Langerhans cells to the epidermis, potentially by modulation of the abundance of macrophage chemotactic cytokines, macrophage inflammatory cytokines and CTNND1 localization in keratinocytes. This Homo sapiens (Human) protein is Keratin, type II cytoskeletal 5 (KRT5).